Consider the following 150-residue polypeptide: 3-dehydroquinate dehydratase (150 aa).

Catalysis depends on tyrosine 26, which acts as the Proton acceptor. Substrate contacts are provided by asparagine 77, histidine 83, and aspartate 90. The active-site Proton donor is histidine 103. Substrate is bound by residues leucine 104–serine 105 and arginine 114.

Belongs to the type-II 3-dehydroquinase family. Homododecamer.

It carries out the reaction 3-dehydroquinate = 3-dehydroshikimate + H2O. It participates in metabolic intermediate biosynthesis; chorismate biosynthesis; chorismate from D-erythrose 4-phosphate and phosphoenolpyruvate: step 3/7. Catalyzes a trans-dehydration via an enolate intermediate. This is 3-dehydroquinate dehydratase from Pectobacterium atrosepticum (strain SCRI 1043 / ATCC BAA-672) (Erwinia carotovora subsp. atroseptica).